The primary structure comprises 214 residues: Zinc finger protein 11 (214 aa).

Positions Met1–Asn27 are disordered. The C2H2-type zinc finger occupies Tyr49–His71. The Nuclear localization signal signature appears at Arg72 to Arg79. Residues His89–Ser130 form a disordered region. The span at Ser102–Thr111 shows a compositional bias: low complexity. Over residues Ser117–Phe128 the composition is skewed to polar residues.

As to expression, expressed in roots, stems, axillary buds and flowers.

It is found in the nucleus. In terms of biological role, probable transcription factor that may regulate cell division and growth. The polypeptide is Zinc finger protein 11 (Arabidopsis thaliana (Mouse-ear cress)).